The following is a 376-amino-acid chain: Mitogen-activated protein kinase 2 (376 aa).

Residues 32 to 319 (YVPIKPIGRG…VTEALQHPYM (288 aa)) enclose the Protein kinase domain. ATP contacts are provided by residues 38-46 (IGRGAYGVV) and Lys61. Asp158 acts as the Proton acceptor in catalysis. Phosphothreonine is present on Thr191. Residues 191–193 (TEY) carry the TXY motif. The residue at position 193 (Tyr193) is a Phosphotyrosine. A Phosphothreonine modification is found at Thr196.

This sequence belongs to the protein kinase superfamily. CMGC Ser/Thr protein kinase family. MAP kinase subfamily. Interacts with MKK3. Post-translationally, dually phosphorylated on Thr-191 and Tyr-193, which activates the enzyme. Phosphorylated on Ser residue. Highest levels in the stem. Present in the leaf, root and flower, but not in seeds.

The catalysed reaction is L-seryl-[protein] + ATP = O-phospho-L-seryl-[protein] + ADP + H(+). The enzyme catalyses L-threonyl-[protein] + ATP = O-phospho-L-threonyl-[protein] + ADP + H(+). With respect to regulation, activated by threonine and tyrosine phosphorylation. The polypeptide is Mitogen-activated protein kinase 2 (MPK2) (Arabidopsis thaliana (Mouse-ear cress)).